We begin with the raw amino-acid sequence, 141 residues long: Large-conductance mechanosensitive channel (141 aa).

The next 2 membrane-spanning stretches (helical) occupy residues 16–36 (VIDLAVGVIIGGAFGKIVDSL) and 83–103 (GAFINTTIDFLIIALAIFVAI).

This sequence belongs to the MscL family. Homopentamer.

Its subcellular location is the cell inner membrane. In terms of biological role, channel that opens in response to stretch forces in the membrane lipid bilayer. May participate in the regulation of osmotic pressure changes within the cell. The protein is Large-conductance mechanosensitive channel of Azoarcus sp. (strain BH72).